A 466-amino-acid chain; its full sequence is MAEGTVLQVIGPIVDVQFPDNKKLPDINNALKVQRIDGSELTIEVSIDLGDSVVRTIAMDSTDGLTRGMKVLDTGAPIEVPVGEATLGRVFNVLGEPVDGGDPIPNSVDRHPIHRSAPKYDELATSTEVLETGIKVIDLLEPYLRGGKTGLFGGAGVGKTVLIQELIHNIAQGHNGISVFTGVGERTREGNDMYYEMKASGVLKNTAMVYGQMNEPPGARMRVGLTGLTMAEDFRDQEGKDVLLFIDNIFRFTQAGSEVSALLGRIPSAVGYQPTLATEMGQLQERITSTKKGSVTSIQAVYVPADDYTDPAPATTFAHLDATTNLERSLTQQGIYPAVDPLESTSSALTPDIVGEDHYEVATQVQHFLQRYKELQDIISILGMDELSDEEKTIVNRARRIQFFLSQPFSVAEQFTGVPGQYVPVEDTVRGFKEILDGKHDDLPEEAFRNVGTIEQAVEKAKKLES.

153–160 lines the ATP pocket; that stretch reads GGAGVGKT.

This sequence belongs to the ATPase alpha/beta chains family. F-type ATPases have 2 components, CF(1) - the catalytic core - and CF(0) - the membrane proton channel. CF(1) has five subunits: alpha(3), beta(3), gamma(1), delta(1), epsilon(1). CF(0) has three main subunits: a(1), b(2) and c(9-12). The alpha and beta chains form an alternating ring which encloses part of the gamma chain. CF(1) is attached to CF(0) by a central stalk formed by the gamma and epsilon chains, while a peripheral stalk is formed by the delta and b chains.

The protein resides in the cell membrane. The enzyme catalyses ATP + H2O + 4 H(+)(in) = ADP + phosphate + 5 H(+)(out). Produces ATP from ADP in the presence of a proton gradient across the membrane. The catalytic sites are hosted primarily by the beta subunits. The chain is ATP synthase subunit beta from Oenococcus oeni (strain ATCC BAA-331 / PSU-1).